The primary structure comprises 1131 residues: DNA-directed RNA polymerase subunit beta (1131 aa).

Residues 1108-1131 form a disordered region; it reads QLARRTPPRPTYESLSRESLDDDE. Residues 1122–1131 show a composition bias toward basic and acidic residues; the sequence is LSRESLDDDE.

This sequence belongs to the RNA polymerase beta chain family. As to quaternary structure, in cyanobacteria the RNAP catalytic core is composed of 2 alpha, 1 beta, 1 beta', 1 gamma and 1 omega subunit. When a sigma factor is associated with the core the holoenzyme is formed, which can initiate transcription.

The enzyme catalyses RNA(n) + a ribonucleoside 5'-triphosphate = RNA(n+1) + diphosphate. Functionally, DNA-dependent RNA polymerase catalyzes the transcription of DNA into RNA using the four ribonucleoside triphosphates as substrates. This is DNA-directed RNA polymerase subunit beta from Nostoc sp. (strain PCC 7120 / SAG 25.82 / UTEX 2576).